The following is a 344-amino-acid chain: Ferredoxin--NADP reductase (344 aa).

FAD-binding residues include Asp36, Gln44, Tyr49, Val89, Phe127, Asp291, and Thr332.

This sequence belongs to the ferredoxin--NADP reductase type 2 family. In terms of assembly, homodimer. Requires FAD as cofactor.

It catalyses the reaction 2 reduced [2Fe-2S]-[ferredoxin] + NADP(+) + H(+) = 2 oxidized [2Fe-2S]-[ferredoxin] + NADPH. This is Ferredoxin--NADP reductase from Beijerinckia indica subsp. indica (strain ATCC 9039 / DSM 1715 / NCIMB 8712).